We begin with the raw amino-acid sequence, 231 residues long: Ion-translocating oxidoreductase complex subunit E (231 aa).

The next 6 membrane-spanning stretches (helical) occupy residues 18 to 38, 39 to 59, 69 to 89, 93 to 113, 127 to 147, and 182 to 202; these read GLVQLLGLCPLLAVTATLTNA, LGLGLATMLVLIGSNILVSLV, IPVFVMIIAALVTSVQLFINA, GLYLSLGIFLPLIVTNCVIIG, STFDGLMMGLGFTLVLCVLGA, and TFLLAMLPPGAFIGMGLLIAL.

Belongs to the NqrDE/RnfAE family. The complex is composed of six subunits: RnfA, RnfB, RnfC, RnfD, RnfE and RnfG.

The protein localises to the cell inner membrane. Its function is as follows. Part of a membrane-bound complex that couples electron transfer with translocation of ions across the membrane. This is Ion-translocating oxidoreductase complex subunit E from Shewanella piezotolerans (strain WP3 / JCM 13877).